We begin with the raw amino-acid sequence, 301 residues long: Ubiquitin thioesterase OTU1 (301 aa).

Residues 5–83 form a UBX-like region; that stretch reads RCKAKNGTHL…IVEEEKNKPK (79 aa). The OTU domain occupies 102–227; it reads VERRVVPADN…GIHYDPLQKV (126 aa). Residues 107–113 are cys-loop; it reads VPADNSC. Residue D110 is part of the active site. Residue C113 is the Nucleophile of the active site. Positions 166–176 are variable-loop; sequence IRRDDTWGGAI. The tract at residues 216–220 is his-loop; sequence YDGIH. Substrate is bound at residue I219. The active site involves H220. The interval 244 to 249 is S2 site; the sequence is DVILAQ. Residues 271-295 form a C2H2-type zinc finger; that stretch reads LRCMVCQTGLVGQKEAREHAKETGH. Residue H295 is part of the active site.

The protein localises to the cytoplasm. It carries out the reaction Thiol-dependent hydrolysis of ester, thioester, amide, peptide and isopeptide bonds formed by the C-terminal Gly of ubiquitin (a 76-residue protein attached to proteins as an intracellular targeting signal).. Functionally, hydrolase that can remove conjugated ubiquitin from proteins and participates in endoplasmic reticulum-associated degradation (ERAD) for misfolded lumenal proteins. May act by triming the ubiquitin chain on the associated substrate to facilitate their threading through the VCP/p97 pore. Ubiquitin moieties on substrates may present a steric impediment to the threading process when the substrate is transferred to the VCP pore and threaded through VCP's axial channel. Mediates deubiquitination of 'Lys-27'-, 'Lys-29'- and 'Lys-33'-linked polyubiquitin chains. Also able to hydrolyze 'Lys-11'-linked ubiquitin chains. Cleaves both polyubiquitin and di-ubiquitin. This Danio rerio (Zebrafish) protein is Ubiquitin thioesterase OTU1 (yod1).